Here is a 126-residue protein sequence, read N- to C-terminus: Small ribosomal subunit protein bS6 (126 aa).

Positions 104–126 are disordered; it reads QGAEKGKSSSKKVAAEAEASEEA.

This sequence belongs to the bacterial ribosomal protein bS6 family.

Functionally, binds together with bS18 to 16S ribosomal RNA. The polypeptide is Small ribosomal subunit protein bS6 (Coxiella burnetii (strain Dugway 5J108-111)).